A 385-amino-acid polypeptide reads, in one-letter code: 1-deoxy-D-xylulose 5-phosphate reductoisomerase (385 aa).

NADPH is bound by residues threonine 13, glycine 14, serine 15, isoleucine 16, asparagine 40, and asparagine 122. Lysine 123 contacts 1-deoxy-D-xylulose 5-phosphate. Glutamate 124 provides a ligand contact to NADPH. A Mn(2+)-binding site is contributed by aspartate 148. 1-deoxy-D-xylulose 5-phosphate-binding residues include serine 149, glutamate 150, serine 177, and histidine 200. Glutamate 150 provides a ligand contact to Mn(2+). Glycine 206 contributes to the NADPH binding site. Serine 213, asparagine 218, lysine 219, and glutamate 222 together coordinate 1-deoxy-D-xylulose 5-phosphate. Glutamate 222 contributes to the Mn(2+) binding site.

The protein belongs to the DXR family. The cofactor is Mg(2+). Mn(2+) is required as a cofactor.

The enzyme catalyses 2-C-methyl-D-erythritol 4-phosphate + NADP(+) = 1-deoxy-D-xylulose 5-phosphate + NADPH + H(+). It participates in isoprenoid biosynthesis; isopentenyl diphosphate biosynthesis via DXP pathway; isopentenyl diphosphate from 1-deoxy-D-xylulose 5-phosphate: step 1/6. Functionally, catalyzes the NADPH-dependent rearrangement and reduction of 1-deoxy-D-xylulose-5-phosphate (DXP) to 2-C-methyl-D-erythritol 4-phosphate (MEP). The polypeptide is 1-deoxy-D-xylulose 5-phosphate reductoisomerase (Francisella tularensis subsp. holarctica (strain FTNF002-00 / FTA)).